Here is a 290-residue protein sequence, read N- to C-terminus: ATP synthase gamma chain (290 aa).

This sequence belongs to the ATPase gamma chain family. F-type ATPases have 2 components, CF(1) - the catalytic core - and CF(0) - the membrane proton channel. CF(1) has five subunits: alpha(3), beta(3), gamma(1), delta(1), epsilon(1). CF(0) has three main subunits: a, b and c.

The protein localises to the cell membrane. In terms of biological role, produces ATP from ADP in the presence of a proton gradient across the membrane. The gamma chain is believed to be important in regulating ATPase activity and the flow of protons through the CF(0) complex. This Buchnera aphidicola subsp. Acyrthosiphon pisum (strain 5A) protein is ATP synthase gamma chain.